The following is a 235-amino-acid chain: Phosphoribosylaminoimidazole-succinocarboxamide synthase (235 aa).

The protein belongs to the SAICAR synthetase family.

It catalyses the reaction 5-amino-1-(5-phospho-D-ribosyl)imidazole-4-carboxylate + L-aspartate + ATP = (2S)-2-[5-amino-1-(5-phospho-beta-D-ribosyl)imidazole-4-carboxamido]succinate + ADP + phosphate + 2 H(+). It participates in purine metabolism; IMP biosynthesis via de novo pathway; 5-amino-1-(5-phospho-D-ribosyl)imidazole-4-carboxamide from 5-amino-1-(5-phospho-D-ribosyl)imidazole-4-carboxylate: step 1/2. This chain is Phosphoribosylaminoimidazole-succinocarboxamide synthase (purC), found in Streptococcus pneumoniae serotype 4 (strain ATCC BAA-334 / TIGR4).